Consider the following 166-residue polypeptide: Putative 4-hydroxy-4-methyl-2-oxoglutarate aldolase (166 aa).

Substrate contacts are provided by residues Gly-74–Ile-77 and Arg-96. Asp-97 contacts a divalent metal cation.

Belongs to the class II aldolase/RraA-like family. As to quaternary structure, homotrimer. A divalent metal cation serves as cofactor.

It catalyses the reaction 4-hydroxy-4-methyl-2-oxoglutarate = 2 pyruvate. The enzyme catalyses oxaloacetate + H(+) = pyruvate + CO2. Functionally, catalyzes the aldol cleavage of 4-hydroxy-4-methyl-2-oxoglutarate (HMG) into 2 molecules of pyruvate. Also contains a secondary oxaloacetate (OAA) decarboxylase activity due to the common pyruvate enolate transition state formed following C-C bond cleavage in the retro-aldol and decarboxylation reactions. This Xanthomonas campestris pv. campestris (strain 8004) protein is Putative 4-hydroxy-4-methyl-2-oxoglutarate aldolase.